The chain runs to 338 residues: Ketol-acid reductoisomerase (NADP(+)) (338 aa).

The region spanning 1-181 (MKVYYDKDAD…GGTKGGVIET (181 aa)) is the KARI N-terminal Rossmann domain. Residues 24–27 (YGSQ), Arg-47, and Ser-52 each bind NADP(+). His-107 is an active-site residue. Residue Gly-133 participates in NADP(+) binding. The 146-residue stretch at 182-327 (NFREETETDL…SQLRAMMPWI (146 aa)) folds into the KARI C-terminal knotted domain. 4 residues coordinate Mg(2+): Asp-190, Glu-194, Glu-226, and Glu-230. Ser-251 is a binding site for substrate.

The protein belongs to the ketol-acid reductoisomerase family. Requires Mg(2+) as cofactor.

The enzyme catalyses (2R)-2,3-dihydroxy-3-methylbutanoate + NADP(+) = (2S)-2-acetolactate + NADPH + H(+). The catalysed reaction is (2R,3R)-2,3-dihydroxy-3-methylpentanoate + NADP(+) = (S)-2-ethyl-2-hydroxy-3-oxobutanoate + NADPH + H(+). The protein operates within amino-acid biosynthesis; L-isoleucine biosynthesis; L-isoleucine from 2-oxobutanoate: step 2/4. Its pathway is amino-acid biosynthesis; L-valine biosynthesis; L-valine from pyruvate: step 2/4. Involved in the biosynthesis of branched-chain amino acids (BCAA). Catalyzes an alkyl-migration followed by a ketol-acid reduction of (S)-2-acetolactate (S2AL) to yield (R)-2,3-dihydroxy-isovalerate. In the isomerase reaction, S2AL is rearranged via a Mg-dependent methyl migration to produce 3-hydroxy-3-methyl-2-ketobutyrate (HMKB). In the reductase reaction, this 2-ketoacid undergoes a metal-dependent reduction by NADPH to yield (R)-2,3-dihydroxy-isovalerate. In Methylobacillus flagellatus (strain ATCC 51484 / DSM 6875 / VKM B-1610 / KT), this protein is Ketol-acid reductoisomerase (NADP(+)).